A 977-amino-acid chain; its full sequence is MASSHSSSPVPQGSSSDVFFKKEVDPTKHIRPVQSLPDVCPKEPTGDSHTLCVAPSLVTDQHRWTVYHSKVNLPAALNDPTLAKRESDFFTKTWGLDFVDTEVIPSLYLPQISKENFIAYQQEISQREKIHERCKNICPPKDTFDRTLLHIHDKSRTDLEQVPKIFMKPDFALDDSLTFNSVLPWSHFNTAGGKGSRDAASSKLLQEKLSHYLDIVEVNIAHQISLRSEAFFHAMTSQHELQDYLKKTTQAVKMLRDKIAQIDKVMCEGSLQILRLALTRNNCVKVYNKLKLMATVHQTQPTVQVLLSTSEFVGALDLIATTQEVLQQELQGIHSFRHLGSQLCELEKLIDKMMIAEFSTYSHSDLNRPLEGECQVLEEERLVSLVFGLLKQRKLNFLEIYGEEMIITAKNIIKERVINKVSQIEEIDTDVVVKLADQMRMLNFPQWIDLLKDIFSKFTVFLQRVKATLNIIHSVVLSVLEKSQRTRELEEIPQQRSAGKDSSLDTDVAYLTHEGWFISDAFSEGEPASAAVDTTSQRNTSPHSEPCSSDSVSEPECTTDSSSSKEQTSACAPPGGIEIIVSEDMRLTDLELGKLASNIQELLCNASDVCHDRAVKFLMSRAKDGFLEKLNSTEFIALSRLMETFIVDTEQICGRKSTSLLGALQSQANKFVNRFHEERRTKLSLLLDNERWKQADVPAEFQDLVDSIADGKIALPEKKPVVTEERKPADVLVVEGHQYAVVGTVLLLIRIILEYCQCVDNIPSVTTDMLTRLTDLLKYFNSRSCQLVLGAGALQVVGLKTITTKNLALSSRCLQLIVHYIPVIRAHFEARLPPKQWSMLRHFDHITKDYHDHIAEISAKLVAIMDSLFDKLLSKYEVKAPVPSPCFRNICKQMTKMHEAIFDLLPEEQTQMLFLRINASYKLHLKKQLSHLNVINDGGPQNGLVTADVAFYTGNLQALKGLKDLDLNMAEIWEQKR.

Phosphoserine is present on Ser-8. Positions 239–261 (HELQDYLKKTTQAVKMLRDKIAQ) form a coiled coil. A disordered region spans residues 528-573 (ASAAVDTTSQRNTSPHSEPCSSDSVSEPECTTDSSSSKEQTSACAP). A compositionally biased stretch (polar residues) spans 532-570 (VDTTSQRNTSPHSEPCSSDSVSEPECTTDSSSSKEQTSA).

It belongs to the VPS54 family. Component of the Golgi-associated retrograde protein (GARP) complex, also called VFT (VPS fifty-three) complex, composed of VPS51, VPS52, VPS53 and VPS54. EIPR1 interacts with GARP complex and mediates its recruitment to the trans-Golgi network. Interacts with VPS51 in an EIPR1-independent manner.

It is found in the golgi apparatus. Its subcellular location is the trans-Golgi network. The protein localises to the membrane. Acts as a component of the GARP complex that is involved in retrograde transport from early and late endosomes to the trans-Golgi network (TGN). The GARP complex is required for the maintenance of the cycling of mannose 6-phosphate receptors between the TGN and endosomes, this cycling is necessary for proper lysosomal sorting of acid hydrolases such as CTSD. Within the GARP complex, required to tether the complex to the TGN. Not involved in endocytic recycling. This Mus musculus (Mouse) protein is Vacuolar protein sorting-associated protein 54 (Vps54).